The sequence spans 363 residues: MDFEDYNSTYEDSYTDDFDTIVALEEFSPLEGRVVRIFLVVVYSIICFLGILGNGLVIVIATFKMKKTVNTVWFLNLAVADFLFNVFLPIHIAYAAMDYHWVFGTAMCKISNFLLIHNMYTSVFLLTVISFDRCISVLLPVWSQNHRSIRLAYMACVVIWVLAFFLSSPSLVFRDTAHLHGKISCFNNFSLSATSSSSWPTHPQMDTVGFGRQMVVTITRFLCGFLVPVLIISACYFTIVYKLRRNRLAKTKKPFKIIVTIIITFFLCWCPYHTLYLLELHHRAMPGSVFSLGVPLATAIAIANSCMNPILYVFMGQDFKKFKVALFSRLVNALSEDTGHSSYPSHRSFTKMSSMNERETSML.

At 1–39 (MDFEDYNSTYEDSYTDDFDTIVALEEFSPLEGRVVRIFL) the chain is on the extracellular side. The N-linked (GlcNAc...) asparagine glycan is linked to N7. A helical membrane pass occupies residues 40–60 (VVVYSIICFLGILGNGLVIVI). The Cytoplasmic portion of the chain corresponds to 61–71 (ATFKMKKTVNT). The chain crosses the membrane as a helical span at residues 72 to 92 (VWFLNLAVADFLFNVFLPIHI). At 93–109 (AYAAMDYHWVFGTAMCK) the chain is on the extracellular side. A disulfide bridge links C108 with C185. A helical transmembrane segment spans residues 110-130 (ISNFLLIHNMYTSVFLLTVIS). Residues 131–152 (FDRCISVLLPVWSQNHRSIRLA) are Cytoplasmic-facing. A helical transmembrane segment spans residues 153-173 (YMACVVIWVLAFFLSSPSLVF). At 174 to 220 (RDTAHLHGKISCFNNFSLSATSSSSWPTHPQMDTVGFGRQMVVTITR) the chain is on the extracellular side. N188 carries an N-linked (GlcNAc...) asparagine glycan. A helical transmembrane segment spans residues 221 to 241 (FLCGFLVPVLIISACYFTIVY). The Cytoplasmic segment spans residues 242 to 256 (KLRRNRLAKTKKPFK). The helical transmembrane segment at 257–277 (IIVTIIITFFLCWCPYHTLYL) threads the bilayer. Residues 278–283 (LELHHR) lie on the Extracellular side of the membrane. Residues 284–304 (AMPGSVFSLGVPLATAIAIAN) traverse the membrane as a helical segment. Topologically, residues 305 to 363 (SCMNPILYVFMGQDFKKFKVALFSRLVNALSEDTGHSSYPSHRSFTKMSSMNERETSML) are cytoplasmic. Phosphoserine is present on S335. The interval 337–363 (DTGHSSYPSHRSFTKMSSMNERETSML) is disordered. T338 bears the Phosphothreonine mark. The segment covering 340–355 (HSSYPSHRSFTKMSSM) has biased composition (polar residues). Phosphoserine is present on residues S345, S348, and S354.

It belongs to the chemokine-like receptor (CMKLR) family. Predominantly expressed in spleen and temperately in adipose tissue.

The protein resides in the cell membrane. In terms of biological role, receptor for the chemoattractant adipokine chemerin/RARRES2 and for the omega-3 fatty acid derived molecule resolvin E1. Interaction with RARRES2 initiates activation of G proteins G(i)/G(o) and beta-arrestin pathways inducing cellular responses via second messenger pathways such as intracellular calcium mobilization, phosphorylation of MAP kinases MAPK1/MAPK3 (ERK1/2), TYRO3, MAPK14/P38MAPK and PI3K leading to multifunctional effects, like, reduction of immune responses, enhancing of adipogenesis and angionesis. Resolvin E1 down-regulates cytokine production in macrophages by reducing the activation of MAPK1/3 (ERK1/2) and NF-kappa-B. Positively regulates adipogenesis and adipocyte metabolism. The chain is Chemerin-like receptor 1 (CMLKR1) from Sus scrofa (Pig).